Here is an 82-residue protein sequence, read N- to C-terminus: Large ribosomal subunit protein bL28 (82 aa).

The interval 1–25 (MAKVDQITKKRAMTGNTRSHALNHS) is disordered.

It belongs to the bacterial ribosomal protein bL28 family.

The polypeptide is Large ribosomal subunit protein bL28 (Malacoplasma penetrans (strain HF-2) (Mycoplasma penetrans)).